The primary structure comprises 249 residues: Tegument protein UL51 homolog (249 aa).

This sequence belongs to the herpesviridae UL51 family. Oligomerizes. Interacts with MDV019; this interaction mediates MDV019 incorporation to virions. Phosphorylated.

The protein resides in the virion tegument. The protein localises to the host cytoplasm. It localises to the host Golgi apparatus. Functionally, plays several roles during the time course of infection, including egress of virus particles from the perinuclear space and secondary envelopment of cytoplasmic capsids that bud into specific trans-Golgi network (TGN)-derived membranes. The sequence is that of Tegument protein UL51 homolog (MDV065) from Gallus gallus (Chicken).